Here is a 190-residue protein sequence, read N- to C-terminus: MSVRVSGKHMEIGDSFRVRIGEQIEQAVTKYFDGGYSSQVTVEKSGSRFSADCKLHLDTGVVLQANGQANEPQSAFDAASERIEKRLRRYKRKLKDHHNGNGQNSTEVAYRVMDSVPFEDEEVPDDYAPTIVAETTKQLRTMSVANAVMALDMTDEPVLMFRSPGKDDLNIVYRRNDGNIGWIDAANIKA.

Belongs to the HPF/YfiA ribosome-associated protein family. Long HPF subfamily. Interacts with 100S ribosomes.

Its subcellular location is the cytoplasm. Its function is as follows. Required for dimerization of active 70S ribosomes into 100S ribosomes in stationary phase; 100S ribosomes are translationally inactive and sometimes present during exponential growth. The sequence is that of Ribosome hibernation promotion factor from Rhizobium meliloti (strain 1021) (Ensifer meliloti).